We begin with the raw amino-acid sequence, 218 residues long: Ribose-5-phosphate isomerase A (218 aa).

Substrate is bound by residues 28-31 (TGST), 81-84 (DGAD), and 94-97 (KGGG). Glutamate 103 serves as the catalytic Proton acceptor. Position 121 (lysine 121) interacts with substrate.

It belongs to the ribose 5-phosphate isomerase family. In terms of assembly, homodimer.

The enzyme catalyses aldehydo-D-ribose 5-phosphate = D-ribulose 5-phosphate. Its pathway is carbohydrate degradation; pentose phosphate pathway; D-ribose 5-phosphate from D-ribulose 5-phosphate (non-oxidative stage): step 1/1. Functionally, catalyzes the reversible conversion of ribose-5-phosphate to ribulose 5-phosphate. This is Ribose-5-phosphate isomerase A from Vibrio cholerae serotype O1 (strain ATCC 39541 / Classical Ogawa 395 / O395).